The sequence spans 544 residues: Chaperonin GroEL (544 aa).

ATP contacts are provided by residues 30 to 33 (TLGP), Lys51, 87 to 91 (DGTTT), Gly415, and Asp495.

The protein belongs to the chaperonin (HSP60) family. As to quaternary structure, forms a cylinder of 14 subunits composed of two heptameric rings stacked back-to-back. Interacts with the co-chaperonin GroES.

It localises to the cytoplasm. The enzyme catalyses ATP + H2O + a folded polypeptide = ADP + phosphate + an unfolded polypeptide.. Functionally, together with its co-chaperonin GroES, plays an essential role in assisting protein folding. The GroEL-GroES system forms a nano-cage that allows encapsulation of the non-native substrate proteins and provides a physical environment optimized to promote and accelerate protein folding. The polypeptide is Chaperonin GroEL (Aeromonas salmonicida (strain A449)).